The chain runs to 107 residues: Period circadian protein (107 aa).

Positions 81 to 107 are disordered; sequence ITNGSNTGTGTSSGSFQPPLLTEALLN. Positions 82–95 are enriched in low complexity; the sequence is TNGSNTGTGTSSGS.

As to quaternary structure, forms a heterodimer with timeless (TIM); the complex then translocates into the nucleus. Phosphorylated with a circadian rhythmicity, probably by the double-time protein (dbt). Phosphorylation could be implicated in the stability of per monomer and in the formation of heterodimer per-tim.

It localises to the nucleus. It is found in the cytoplasm. Its subcellular location is the perinuclear region. Essential for biological clock functions. Determines the period length of circadian and ultradian rhythms; an increase in PER dosage leads to shortened circadian rhythms and a decrease leads to lengthened circadian rhythms. Essential for the circadian rhythmicity of locomotor activity, eclosion behavior, and for the rhythmic component of the male courtship song that originates in the thoracic nervous system. The biological cycle depends on the rhythmic formation and nuclear localization of the TIM-PER complex. Light induces the degradation of TIM, which promotes elimination of PER. Nuclear activity of the heterodimer coordinatively regulates PER and TIM transcription through a negative feedback loop. Behaves as a negative element in circadian transcriptional loop. Does not appear to bind DNA, suggesting indirect transcriptional inhibition. The polypeptide is Period circadian protein (per) (Beris vallata (Common orange legionnaire)).